The sequence spans 400 residues: Nicotinate phosphoribosyltransferase (400 aa).

The residue at position 220 (histidine 220) is a Phosphohistidine; by autocatalysis.

It belongs to the NAPRTase family. Post-translationally, transiently phosphorylated on a His residue during the reaction cycle. Phosphorylation strongly increases the affinity for substrates and increases the rate of nicotinate D-ribonucleotide production. Dephosphorylation regenerates the low-affinity form of the enzyme, leading to product release.

It carries out the reaction nicotinate + 5-phospho-alpha-D-ribose 1-diphosphate + ATP + H2O = nicotinate beta-D-ribonucleotide + ADP + phosphate + diphosphate. It functions in the pathway cofactor biosynthesis; NAD(+) biosynthesis; nicotinate D-ribonucleotide from nicotinate: step 1/1. Its function is as follows. Catalyzes the synthesis of beta-nicotinate D-ribonucleotide from nicotinate and 5-phospho-D-ribose 1-phosphate at the expense of ATP. The polypeptide is Nicotinate phosphoribosyltransferase (Escherichia fergusonii (strain ATCC 35469 / DSM 13698 / CCUG 18766 / IAM 14443 / JCM 21226 / LMG 7866 / NBRC 102419 / NCTC 12128 / CDC 0568-73)).